An 826-amino-acid chain; its full sequence is Homeobox-leucine zipper protein HDG5 (826 aa).

2 disordered regions span residues M1–P34 and E69–T119. Positions P23 to P34 are enriched in low complexity. Residues E88–E105 show a composition bias toward basic and acidic residues. The span at A110–T119 shows a compositional bias: basic residues. The segment at residues K111–Q170 is a DNA-binding region (homeobox). Residues Q165 to N189 adopt a coiled-coil conformation. Residues A314 to S558 enclose the START domain.

Belongs to the HD-ZIP homeobox family. Class IV subfamily. Expressed in shoot apical meristem (SAM) with higher levels in L1 cells and the epidermal layer of young leaves. Expressed in the L1 of apical inflorescence meristems, early flower primordia, carpel and stamen filament epidermis, ovule primordia, nucellus and chalaze.

It localises to the nucleus. Functionally, probable transcription factor. Involved, together with PDF2, in the regulation of flower organs development by promoting the expression of APETALA 3 (AP3) in the epidermis and internal cell layers of developing flowers. The sequence is that of Homeobox-leucine zipper protein HDG5 from Arabidopsis thaliana (Mouse-ear cress).